A 119-amino-acid chain; its full sequence is Large ribosomal subunit protein uL22 (119 aa).

This sequence belongs to the universal ribosomal protein uL22 family. Part of the 50S ribosomal subunit.

Its function is as follows. This protein binds specifically to 23S rRNA; its binding is stimulated by other ribosomal proteins, e.g. L4, L17, and L20. It is important during the early stages of 50S assembly. It makes multiple contacts with different domains of the 23S rRNA in the assembled 50S subunit and ribosome. In terms of biological role, the globular domain of the protein is located near the polypeptide exit tunnel on the outside of the subunit, while an extended beta-hairpin is found that lines the wall of the exit tunnel in the center of the 70S ribosome. The chain is Large ribosomal subunit protein uL22 from Chlorobium phaeovibrioides (strain DSM 265 / 1930) (Prosthecochloris vibrioformis (strain DSM 265)).